The following is an 886-amino-acid chain: Peptidyl-lysine N-acetyltransferase PatZ (886 aa).

The 37-residue stretch at 487 to 523 (QPILQAYGMNTLPTWIASDSTEAVHIAEQIGYPVALK) folds into the ATP-grasp domain. The 156-residue stretch at 726-881 (CLFRPILPED…GIVGLTLNLA (156 aa)) folds into the N-acetyltransferase domain.

The protein in the N-terminal section; belongs to the acetate CoA ligase alpha subunit family. In the central section; belongs to the acetate CoA ligase beta subunit family. In terms of assembly, stable tetramer in solution. Oligomerizes to an octameric form by autoacetylation. In terms of processing, autoacetylated. Deacetylated by CobB.

It catalyses the reaction L-lysyl-[protein] + acetyl-CoA = N(6)-acetyl-L-lysyl-[protein] + CoA + H(+). Functionally, catalyzes the acetyl-CoA-dependent acetylation of lysine residues of a large number of target proteins. Acetylates RNase R in exponential phase cells and RNase II. Required for the glucose-dependent acetylation on multiple lysines of alpha, beta and beta' RNAP subunits. Also acetylates acetyl-coenzyme A synthetase (Acs) and the chromosomal replication initiator protein DnaA, and inhibits their activity. Overexpression leads to the acetylation of a large number of additional proteins and inhibits motility. This Escherichia coli (strain K12) protein is Peptidyl-lysine N-acetyltransferase PatZ.